A 350-amino-acid chain; its full sequence is Mannonate dehydratase (350 aa).

Belongs to the mannonate dehydratase family. Fe(2+) is required as a cofactor. The cofactor is Mn(2+).

It carries out the reaction D-mannonate = 2-dehydro-3-deoxy-D-gluconate + H2O. Its pathway is carbohydrate metabolism; pentose and glucuronate interconversion. Its function is as follows. Catalyzes the dehydration of D-mannonate. The protein is Mannonate dehydratase of Clostridium perfringens (strain 13 / Type A).